A 32-amino-acid polypeptide reads, in one-letter code: Cytochrome b6-f complex subunit 7 (32 aa).

The helical transmembrane segment at Phe-5–Ala-25 threads the bilayer.

This sequence belongs to the PetM family. The 4 large subunits of the cytochrome b6-f complex are cytochrome b6, subunit IV (17 kDa polypeptide, PetD), cytochrome f and the Rieske protein, while the 4 small subunits are PetG, PetL, PetM and PetN. The complex functions as a dimer.

The protein resides in the plastid. It is found in the chloroplast thylakoid membrane. Component of the cytochrome b6-f complex, which mediates electron transfer between photosystem II (PSII) and photosystem I (PSI), cyclic electron flow around PSI, and state transitions. This Guillardia theta (Cryptophyte) protein is Cytochrome b6-f complex subunit 7.